The following is a 377-amino-acid chain: Flagellin (377 aa).

Belongs to the bacterial flagellin family.

It is found in the secreted. The protein localises to the bacterial flagellum. Functionally, flagellin is the subunit protein which polymerizes to form the filaments of bacterial flagella. The polypeptide is Flagellin (fla) (Clostridium tyrobutyricum).